Consider the following 316-residue polypeptide: Protein FLUORESCENT IN BLUE LIGHT, chloroplastic (316 aa).

The transit peptide at 1 to 26 (MAALIRCCSSFSHTSGGQPPPRDKSR) directs the protein to the chloroplast. The chain crosses the membrane as a helical span at residues 125-145 (MFSMPILLLVALIGATVGGLL). The stretch at 144–175 (LLARQRKGELQRLNEQLRQINAALRRQAKIES) forms a coiled coil. TPR repeat units lie at residues 203 to 236 (LISK…AQSL), 243 to 276 (KKAA…SKRE), and 283 to 316 (TEAY…LETD).

Part of the FLU-containing chloroplast membrane complex composed of FLU, CRD1, PORB, PORC, CHLP and HEMA1. Interacts with HEMA1 (via C-terminus) only in the absence of light. No interaction with HEMA2.

It localises to the plastid. The protein localises to the chloroplast membrane. The protein resides in the chloroplast thylakoid membrane. In terms of biological role, negative regulator of tetrapyrrole biosynthesis (including chlorophyll) in chloroplasts, probably via HEMA1 repression. Inhibits especially the magnesium ion Mg(2+) branch of tetrapyrrole biosynthesis, but independently of heme. In Arabidopsis thaliana (Mouse-ear cress), this protein is Protein FLUORESCENT IN BLUE LIGHT, chloroplastic (FLU).